A 697-amino-acid polypeptide reads, in one-letter code: Trishanku (697 aa).

A disordered region spans residues 1-94 (MEIEPVVRIS…NNNSNSNGTD (94 aa)). The span at 12 to 47 (NGNNNQNNNNNNNNNTNNNSNNNNNNNNSSNINSTN) shows a compositional bias: low complexity. The segment covering 58–72 (KMISNINNQKSPNPL) has biased composition (polar residues). Positions 73–91 (NSSVDDNNNTNNNNNSNSN) are enriched in low complexity. One can recognise a BTB domain in the interval 122–189 (SDVIFKVGDR…ICIGILDLDY (68 aa)). Residues 311–455 (IQQQQQQQQQ…DSANDDYEYS (145 aa)) form a disordered region. Over residues 312–331 (QQQQQQQQQQLQSANGASGK) the composition is skewed to low complexity. Positions 332–344 (SHGKRSSSSHLKK) are enriched in basic residues. A compositionally biased stretch (low complexity) spans 353 to 363 (GSCSSRCSSRR). Over residues 416–453 (DDFENDSEDGDDDDEDDDEDDDFTDDDDKDDSANDDYE) the composition is skewed to acidic residues.

In terms of tissue distribution, expressed strongly in presumptive spore (prespore or psp) cells during the late G2 phase of cell cycle. Present at a low level in vegetative cells.

Its function is as follows. Required for normal morphogenesis and cell-type stability. The protein is Trishanku (triA) of Dictyostelium discoideum (Social amoeba).